The following is a 707-amino-acid chain: MSSALRSRARSASLGTTTQGWDPPPLRRPSRARRRQWMREAAQAAAQAAVQAAQAAAAQVAQAHVDEDEVVDLMTDEAGGGVTTLTTLSSVSTTTVLGHATFSACVRSDVMRDGEKEDAASDKENQRRPVVPSTSSRGSAASGDGYHGLRCRETSAMWSFEYDRDGDVTSVRRALFTGGSDPSDSVSGVRGGRKRPLRPPLVSLARTPLCRRRVGGVDAVLEENDVELRAESQDSAVASGPGRVPQPLSGSSGEESATAVEADSTSHDDVHCTCSNDQIITTSIRGLTCDPRMFLRLTHPELCELSISYLLVYVPKEDDFCHKICYAVDMSDESYRLGQGSFGEVWPLDRYRVVKVARKHSETVLTVWMSGLIRTRAAGEQQQPPSLVGTGVHRGLLTATGCCLLHNVTVHRRFHTDMFHHDQWKLACIDSYRRAFCTLADAIKFLNHQCRVCHFDITPMNVLIDVNPHNPSEIVRAALCDYSLSEPYPDYNERCVAVFQETGTARRIPNCSHRLRECYHPAFRPMPLQKLLICDPHARFPVAGLRRYCMSELSALGNVLGFCLMRLLDRRGLDEVRMGTEALLFKHAGAACRALENGKLTHCSDACLLILAAQMSYGACLLGEHGAALVSHTLRFVEAKMSSCRVRAFRRFYHECSQTMLHEYVRKNVERLLATSDGLYLYNAFRRTTSIICEEDLDGDCRQLFPE.

Low complexity predominate over residues 1 to 14; it reads MSSALRSRARSASL. 4 disordered regions span residues 1–32, 113–147, 176–199, and 231–264; these read MSSALRSRARSASLGTTTQGWDPPPLRRPSRA, DGEKEDAASDKENQRRPVVPSTSSRGSAASGDGYH, FTGGSDPSDSVSGVRGGRKRPLRP, and ESQDSAVASGPGRVPQPLSGSSGEESATAVEADS. Residues 113 to 127 show a composition bias toward basic and acidic residues; it reads DGEKEDAASDKENQR. Low complexity predominate over residues 178–188; that stretch reads GGSDPSDSVSG. The active-site Proton acceptor is the Asp456.

Belongs to the protein kinase superfamily. Tyr protein kinase family. HCMV ganciclovir subfamily. As to quaternary structure, interacts with UL83. Autophosphorylates on serine and threonine residues.

It is found in the virion. The enzyme catalyses L-seryl-[protein] + ATP = O-phospho-L-seryl-[protein] + ADP + H(+). It catalyses the reaction L-threonyl-[protein] + ATP = O-phospho-L-threonyl-[protein] + ADP + H(+). Functionally, serine/threonine protein kinase that plays important roles in several processes including nuclear viral egress, viral replication or regulation of host cell cycle progression. Participates in the acquisition of tegument during virion morphogenesis in the nucleus. Redistributes the host nuclear lamina by phosphorylating cellular Lamins-A/C. Plays a role in viral DNA synthesis by phosphorylating the DNA polymerase processivity factor UL44. Stimulates host cell cycle to support viral DNA synthesis by phosphorylating host retinoblastoma/RB1 protein. Additional substrates have been identified including host EF1D or H2B. Also phosphorylates host SAMHD1 and thereby counteracts its antiviral effect by reducing its dNTP hydrolase activity. This Homo sapiens (Human) protein is Serine/threonine protein kinase UL97 (UL97).